The following is a 122-amino-acid chain: Large ribosomal subunit protein uL18 (122 aa).

It belongs to the universal ribosomal protein uL18 family. Part of the 50S ribosomal subunit; part of the 5S rRNA/L5/L18/L25 subcomplex. Contacts the 5S and 23S rRNAs.

Its function is as follows. This is one of the proteins that bind and probably mediate the attachment of the 5S RNA into the large ribosomal subunit, where it forms part of the central protuberance. In Desulforamulus reducens (strain ATCC BAA-1160 / DSM 100696 / MI-1) (Desulfotomaculum reducens), this protein is Large ribosomal subunit protein uL18.